Reading from the N-terminus, the 217-residue chain is Large ribosomal subunit protein uL1 (217 aa).

It belongs to the universal ribosomal protein uL1 family. In terms of assembly, part of the 50S ribosomal subunit.

In terms of biological role, binds directly to 23S rRNA. Probably involved in E site tRNA release. Its function is as follows. Protein L1 is also a translational repressor protein, it controls the translation of its operon by binding to its mRNA. This chain is Large ribosomal subunit protein uL1, found in Aeropyrum pernix (strain ATCC 700893 / DSM 11879 / JCM 9820 / NBRC 100138 / K1).